Here is a 290-residue protein sequence, read N- to C-terminus: MRIADYSVTKAVLERHGFTFKKSFGQNFLTDTNILQKIVDTAEIDDQVNVIEIGPGIGALTEFLAERAAQVMAFEIDHRLVPILADTLRDFDNVTVVNEDILKVDLAQHIQNFKNPDLPIKVVANLPYYITTPILMHLIESGIPFCEFVVMMQKEVADRISAQPNTKAYGSLSIAVQYYMTAKVAFIVPRTVFVPAPNVDSAILKMVRRPEPAVAVEDENFFFKVSKASFTHRRKTLWNNLTGYFGKTEEVKDKLTKALDQAGLSPSVRGEALSLAEFAGLADALKGQGL.

N27, L29, G54, E75, D100, and N125 together coordinate S-adenosyl-L-methionine.

The protein belongs to the class I-like SAM-binding methyltransferase superfamily. rRNA adenine N(6)-methyltransferase family. RsmA subfamily.

It is found in the cytoplasm. It catalyses the reaction adenosine(1518)/adenosine(1519) in 16S rRNA + 4 S-adenosyl-L-methionine = N(6)-dimethyladenosine(1518)/N(6)-dimethyladenosine(1519) in 16S rRNA + 4 S-adenosyl-L-homocysteine + 4 H(+). Specifically dimethylates two adjacent adenosines (A1518 and A1519) in the loop of a conserved hairpin near the 3'-end of 16S rRNA in the 30S particle. May play a critical role in biogenesis of 30S subunits. The polypeptide is Ribosomal RNA small subunit methyltransferase A (Streptococcus pneumoniae (strain ATCC 700669 / Spain 23F-1)).